A 572-amino-acid chain; its full sequence is MGKASKKSVAVAVAPAAVPAKGKGGKKREAEDEIEKAVSAKKQKAAAAPPAKAVPAPKADAKKAKKQPPPKKAASSSSGSSSEEDSSESEEEVKVQVKKTTKPVKQESSSDESSDESSDDEDAKPADPVANNGLKKGKPASSDSESDSDDEMDEDEKPAAPVKKTSVTAQKKKDDSDSSESESDESDSDEDVPTKSKAPAVAAKNDDSTDGSESESDSEDEDAAPKGAAKKESSSDEEDDSSEESSDDEPKQPQQKKAQEESSEESSEEDSDEEDEKLAKTPKKKTPAATKSQNDEPKTPASNQSQGTESATLFMGNLSFNLNQDQVKEFFQEVGEVISVRLATHEDGSSRGFGHVQFASSEEAKKALELHGCDLDGRPVRLDLAHERGAYTPHSRNDTGSFQKQNRGSSQSIFVKGFDSSLEESKIRESLEGHFADCGEITRVSVPMDRETGASKGIAYIDFKDQASFSKALELSGSDLGGYNLYVDEAKPKGDSRDGGGRRGGRSGDRFGGRSGDRFGGRSGGRFGGRDGGRRGGRGGRDGGRRGGRGGFQSRQSAGTASTGKKTTFGDE.

2 disordered regions span residues 1–312 (MGKA…ESAT) and 488–572 (DEAK…FGDE). Over residues 7–21 (KSVAVAVAPAAVPAK) the composition is skewed to low complexity. A compositionally biased stretch (basic and acidic residues) spans 27 to 38 (KREAEDEIEKAV). Low complexity-rich tracts occupy residues 45-58 (AAAA…PAPK) and 72-81 (KAASSSSGSS). Composition is skewed to acidic residues over residues 82 to 91 (SEEDSSESEE), 109 to 122 (SSDE…DDED), 144 to 156 (SESD…DEDE), 177 to 191 (DSSE…SDED), 208 to 222 (STDG…EDED), 235 to 247 (SDEE…ESSD), and 261 to 276 (ESSE…EEDE). Residues 300–311 (PASNQSQGTESA) are compositionally biased toward polar residues. RRM domains lie at 311–387 (ATLF…LAHE) and 411–492 (QSIF…EAKP). Basic and acidic residues-rich tracts occupy residues 488–520 (DEAK…DRFG) and 528–545 (GGRD…DGGR). Positions 553–566 (QSRQSAGTASTGKK) are enriched in polar residues.

The protein localises to the nucleus. The protein resides in the nucleolus. Involved in pre-rRNA processing and ribosome assembly. The protein is Nucleolin 1 of Oryza sativa subsp. japonica (Rice).